A 345-amino-acid polypeptide reads, in one-letter code: Phosphoribosylformylglycinamidine cyclo-ligase (345 aa).

This sequence belongs to the AIR synthase family.

Its subcellular location is the cytoplasm. It catalyses the reaction 2-formamido-N(1)-(5-O-phospho-beta-D-ribosyl)acetamidine + ATP = 5-amino-1-(5-phospho-beta-D-ribosyl)imidazole + ADP + phosphate + H(+). It functions in the pathway purine metabolism; IMP biosynthesis via de novo pathway; 5-amino-1-(5-phospho-D-ribosyl)imidazole from N(2)-formyl-N(1)-(5-phospho-D-ribosyl)glycinamide: step 2/2. This Shewanella sediminis (strain HAW-EB3) protein is Phosphoribosylformylglycinamidine cyclo-ligase.